Here is a 280-residue protein sequence, read N- to C-terminus: Large ribosomal subunit protein uL2 (280 aa).

Disordered regions lie at residues 32–54 and 221–280; these read SLLV…SRHM and RGMA…DSKK. Positions 37–49 are enriched in polar residues; it reads NKSTGGRNNNGRV. Residues 232–242 are compositionally biased toward gly residues; that stretch reads MGGGEGKSKSG. The segment covering 257–280 has biased composition (basic residues); it reads KGLKTRKRKKASSKLIVRRRDSKK.

The protein belongs to the universal ribosomal protein uL2 family. Part of the 50S ribosomal subunit. Forms a bridge to the 30S subunit in the 70S ribosome.

One of the primary rRNA binding proteins. Required for association of the 30S and 50S subunits to form the 70S ribosome, for tRNA binding and peptide bond formation. It has been suggested to have peptidyltransferase activity; this is somewhat controversial. Makes several contacts with the 16S rRNA in the 70S ribosome. The sequence is that of Large ribosomal subunit protein uL2 from Chloroherpeton thalassium (strain ATCC 35110 / GB-78).